A 428-amino-acid chain; its full sequence is Sialidase-3 (428 aa).

The short motif at 24–27 (YRIP) is the FRIP motif element. Substrate-binding residues include Arg-25 and Arg-45. Residue Asp-50 is the Proton acceptor of the active site. Residues 129–140 (IYSQDAGCSWSE) form a BNR 1 repeat. Substrate contacts are provided by Tyr-179 and Tyr-181. Residues 203 to 214 (IYSDDLGVTWHH) form a BNR 2 repeat. Substrate contacts are provided by Glu-225 and Arg-245. The BNR 3 repeat unit spans residues 254–265 (ALSTDHGEGFQR). The tract at residues 294–318 (RCQDSSSKDAPTIQQSSPGSSLRLE) is disordered. Polar residues predominate over residues 301-313 (KDAPTIQQSSPGS). A Phosphoserine modification is found at Ser-313. Arg-340 provides a ligand contact to substrate. Tyr-370 acts as the Nucleophile in catalysis. Glu-387 is an active-site residue.

The protein belongs to the glycosyl hydrolase 33 family. Interacts with CAV1; this interaction enhances NEU3 sialidase activity within caveola. Interacts with EGFR; this interaction mediates desialylation of EGFR and enhances downstream signaling. In terms of processing, palmitoylated; may regulate intracellular trafficking and anchorage to plasma membrane and endomembranes. In terms of tissue distribution, highly expressed in skeletal muscle, testis, adrenal gland and thymus, followed by pancreas, liver, heart and thymus. Weakly expressed in kidney, placenta, brain and lung.

The protein localises to the cell membrane. It is found in the membrane. Its subcellular location is the caveola. The protein resides in the early endosome membrane. It localises to the recycling endosome membrane. The protein localises to the lysosome membrane. The enzyme catalyses Hydrolysis of alpha-(2-&gt;3)-, alpha-(2-&gt;6)-, alpha-(2-&gt;8)- glycosidic linkages of terminal sialic acid residues in oligosaccharides, glycoproteins, glycolipids, colominic acid and synthetic substrates.. The catalysed reaction is a ganglioside GD1a + H2O = a ganglioside GM1 + N-acetylneuraminate. It carries out the reaction a ganglioside GD1a (d18:1(4E)) + H2O = a ganglioside GM1 (d18:1(4E)) + N-acetylneuraminate. It catalyses the reaction a ganglioside GD1b + H2O = a ganglioside GM1 + N-acetylneuraminate. The enzyme catalyses a ganglioside GD1b (d18:1(4E)) + H2O = a ganglioside GM1 (d18:1(4E)) + N-acetylneuraminate. The catalysed reaction is a ganglioside GD3 + H2O = a ganglioside GM3 + N-acetylneuraminate. It carries out the reaction a ganglioside GD3 (d18:1(4E)) + H2O = a ganglioside GM3 (d18:1(4E)) + N-acetylneuraminate. It catalyses the reaction a ganglioside GM3 + H2O = a beta-D-galactosyl-(1-&gt;4)-beta-D-glucosyl-(1&lt;-&gt;1)-ceramide + N-acetylneuraminate. The enzyme catalyses a ganglioside GM1 + H2O = a ganglioside GA1 + N-acetylneuraminate. The catalysed reaction is a ganglioside GM1 (d18:1(4E)) + H2O = a ganglioside GA1 (d18:1(4E)) + N-acetylneuraminate. It carries out the reaction a ganglioside GM2 (d18:1(4E)) + H2O = a ganglioside GA2 (d18:1(4E)) + N-acetylneuraminate. It catalyses the reaction a ganglioside GM3 (d18:1(4E)) + H2O = a beta-D-Gal-(1-&gt;4)-beta-D-Glc-(1&lt;-&gt;1)-Cer(d18:1(4E)) + N-acetylneuraminate. The enzyme catalyses a ganglioside GT1b + H2O = a ganglioside GD1b + N-acetylneuraminate. Exo-alpha-sialidase that catalyzes the hydrolytic cleavage of the terminal sialic acid (N-acetylneuraminic acid, Neu5Ac) of a glycan moiety in the catabolism of glycolipids, glycoproteins and oligosacharides. Displays high catalytic efficiency for gangliosides including alpha-(2-&gt;3)-sialylated GD1a and GM3 and alpha-(2-&gt;8)-sialylated GD3. Plays a role in the regulation of transmembrane signaling through the modulation of ganglioside content of the lipid bilayer and by direct interaction with signaling receptors, such as EGFR. Desialylates EGFR and activates downstream signaling in proliferating cells. Contributes to clathrin-mediated endocytosis by regulating sorting of endocytosed receptors to early and recycling endosomes. The sequence is that of Sialidase-3 (NEU3) from Homo sapiens (Human).